A 118-amino-acid chain; its full sequence is D-dopachrome decarboxylase-B (118 aa).

Pro2 carries the post-translational modification N-acetylproline.

Belongs to the MIF family. Homotrimer.

It localises to the cytoplasm. It catalyses the reaction D-dopachrome + H(+) = 5,6-dihydroxyindole + CO2. Its function is as follows. Tautomerization of D-dopachrome with decarboxylation to give 5,6-dihydroxyindole (DHI). This is D-dopachrome decarboxylase-B (ddt-b) from Xenopus laevis (African clawed frog).